A 177-amino-acid polypeptide reads, in one-letter code: MSRIGKKPVSVPAGVTAAIEGKTLSVKGPKGTLSISLADEVSYAIEDGSISVQPINETKRARSFWGMQRTLVQNLITGVTEGYSKTLQITGVGYRANVQGKNLKLQLGYSHDVDFAIPEGITIATPDQTTVQISGIDKQKVGQVAAEIRRWRKPEPYKGKGIKYAGEYIFRKEGKKK.

It belongs to the universal ribosomal protein uL6 family. In terms of assembly, part of the 50S ribosomal subunit.

Functionally, this protein binds to the 23S rRNA, and is important in its secondary structure. It is located near the subunit interface in the base of the L7/L12 stalk, and near the tRNA binding site of the peptidyltransferase center. This Rhizorhabdus wittichii (strain DSM 6014 / CCUG 31198 / JCM 15750 / NBRC 105917 / EY 4224 / RW1) (Sphingomonas wittichii) protein is Large ribosomal subunit protein uL6.